We begin with the raw amino-acid sequence, 227 residues long: Cytochrome c oxidase subunit 2 (227 aa).

The Mitochondrial intermembrane portion of the chain corresponds to 1 to 14 (MAHPAQLGLQDATS). The helical transmembrane segment at 15–45 (PVMEELITFHDHALMAMSLISLLVLYALFST) threads the bilayer. Residues 46–59 (LTTKMTNTNITDAQ) are Mitochondrial matrix-facing. The helical transmembrane segment at 60–87 (EMETIWTILPAIILVLIAFPSLRILYMT) threads the bilayer. Residues 88–227 (DEVNNPSFTI…IFEMGPVFTL (140 aa)) lie on the Mitochondrial intermembrane side of the membrane. Cu cation-binding residues include His161, Cys196, Glu198, Cys200, His204, and Met207. A Mg(2+)-binding site is contributed by Glu198.

This sequence belongs to the cytochrome c oxidase subunit 2 family. In terms of assembly, component of the cytochrome c oxidase (complex IV, CIV), a multisubunit enzyme composed of 14 subunits. The complex is composed of a catalytic core of 3 subunits MT-CO1, MT-CO2 and MT-CO3, encoded in the mitochondrial DNA, and 11 supernumerary subunits COX4I, COX5A, COX5B, COX6A, COX6B, COX6C, COX7A, COX7B, COX7C, COX8 and NDUFA4, which are encoded in the nuclear genome. The complex exists as a monomer or a dimer and forms supercomplexes (SCs) in the inner mitochondrial membrane with NADH-ubiquinone oxidoreductase (complex I, CI) and ubiquinol-cytochrome c oxidoreductase (cytochrome b-c1 complex, complex III, CIII), resulting in different assemblies (supercomplex SCI(1)III(2)IV(1) and megacomplex MCI(2)III(2)IV(2)). Found in a complex with TMEM177, COA6, COX18, COX20, SCO1 and SCO2. Interacts with TMEM177 in a COX20-dependent manner. Interacts with COX20. Interacts with COX16. Cu cation serves as cofactor.

It is found in the mitochondrion inner membrane. The catalysed reaction is 4 Fe(II)-[cytochrome c] + O2 + 8 H(+)(in) = 4 Fe(III)-[cytochrome c] + 2 H2O + 4 H(+)(out). In terms of biological role, component of the cytochrome c oxidase, the last enzyme in the mitochondrial electron transport chain which drives oxidative phosphorylation. The respiratory chain contains 3 multisubunit complexes succinate dehydrogenase (complex II, CII), ubiquinol-cytochrome c oxidoreductase (cytochrome b-c1 complex, complex III, CIII) and cytochrome c oxidase (complex IV, CIV), that cooperate to transfer electrons derived from NADH and succinate to molecular oxygen, creating an electrochemical gradient over the inner membrane that drives transmembrane transport and the ATP synthase. Cytochrome c oxidase is the component of the respiratory chain that catalyzes the reduction of oxygen to water. Electrons originating from reduced cytochrome c in the intermembrane space (IMS) are transferred via the dinuclear copper A center (CU(A)) of subunit 2 and heme A of subunit 1 to the active site in subunit 1, a binuclear center (BNC) formed by heme A3 and copper B (CU(B)). The BNC reduces molecular oxygen to 2 water molecules using 4 electrons from cytochrome c in the IMS and 4 protons from the mitochondrial matrix. This chain is Cytochrome c oxidase subunit 2 (MT-CO2), found in Mandrillus leucophaeus (Drill).